The sequence spans 1093 residues: Error-prone DNA polymerase (1093 aa).

The disordered stretch occupies residues 1 to 55; it reads MGWFNGPPSWAEMERVLDSKPRRAGESAAPEPDGPLSRGRATYRPPDEGRAARSS. The span at 12–25 shows a compositional bias: basic and acidic residues; the sequence is EMERVLDSKPRRAG.

It belongs to the DNA polymerase type-C family. DnaE2 subfamily.

The protein localises to the cytoplasm. It carries out the reaction DNA(n) + a 2'-deoxyribonucleoside 5'-triphosphate = DNA(n+1) + diphosphate. DNA polymerase involved in damage-induced mutagenesis and translesion synthesis (TLS). It is not the major replicative DNA polymerase. This Mycolicibacterium paratuberculosis (strain ATCC BAA-968 / K-10) (Mycobacterium paratuberculosis) protein is Error-prone DNA polymerase.